A 109-amino-acid polypeptide reads, in one-letter code: ATPase inhibitor mai-2, mitochondrial (109 aa).

Disordered stretches follow at residues 17 to 39 and 73 to 95; these read RFST…SIRD and QEVD…HQKR. Residues 21–35 are compositionally biased toward gly residues; that stretch reads GGHGDGAGRGGGSGG. A coiled-coil region spans residues 45-109; it reads GKMEAAREDE…EAEERALGKE (65 aa).

The protein belongs to the ATPase inhibitor family.

The protein localises to the mitochondrion. Functionally, thought to be a regulatory component of the ATP-synthesizing complex in the mitochondria. The polypeptide is ATPase inhibitor mai-2, mitochondrial (Caenorhabditis briggsae).